The chain runs to 240 residues: UPF0173 metal-dependent hydrolase OE_2513F (240 aa).

It belongs to the UPF0173 family.

In Halobacterium salinarum (strain ATCC 29341 / DSM 671 / R1), this protein is UPF0173 metal-dependent hydrolase OE_2513F.